Here is a 149-residue protein sequence, read N- to C-terminus: Large ribosomal subunit protein uL22 (149 aa).

It belongs to the universal ribosomal protein uL22 family. In terms of assembly, part of the 50S ribosomal subunit.

In terms of biological role, this protein binds specifically to 23S rRNA. It makes multiple contacts with different domains of the 23S rRNA in the assembled 50S subunit and ribosome. The globular domain of the protein is located near the polypeptide exit tunnel on the outside of the subunit, while an extended beta-hairpin is found that lines the wall of the exit tunnel in the center of the 70S ribosome. This is Large ribosomal subunit protein uL22 from Picrophilus torridus (strain ATCC 700027 / DSM 9790 / JCM 10055 / NBRC 100828 / KAW 2/3).